The following is an 851-amino-acid chain: DNA mismatch repair protein MutS (851 aa).

602 to 609 (GPNMSGKS) serves as a coordination point for ATP.

This sequence belongs to the DNA mismatch repair MutS family.

This protein is involved in the repair of mismatches in DNA. It is possible that it carries out the mismatch recognition step. This protein has a weak ATPase activity. The chain is DNA mismatch repair protein MutS from Streptococcus pyogenes serotype M12 (strain MGAS2096).